The following is a 67-amino-acid chain: Large ribosomal subunit protein bL35 (67 aa).

This sequence belongs to the bacterial ribosomal protein bL35 family.

The chain is Large ribosomal subunit protein bL35 from Gloeothece citriformis (strain PCC 7424) (Cyanothece sp. (strain PCC 7424)).